The chain runs to 673 residues: Fatty acyl-CoA synthetase B (673 aa).

The N-terminal stretch at 1-18 (MINNWLAVGLLVVSGILA) is a signal peptide. Asn-267 carries N-linked (GlcNAc...) asparagine glycosylation.

It belongs to the ATP-dependent AMP-binding enzyme family.

It is found in the endoplasmic reticulum. The enzyme catalyses a long-chain fatty acid + ATP + CoA = a long-chain fatty acyl-CoA + AMP + diphosphate. In terms of biological role, long chain fatty acid acyl-CoA synthetases catalyze the formation of a thiester bond between a free fatty acid and coenzyme A during fatty acid metabolic process. The chain is Fatty acyl-CoA synthetase B (fcsB) from Dictyostelium discoideum (Social amoeba).